The primary structure comprises 403 residues: MDTKAFKRSLNHSENYYRQGFGHKDEVAGMMTSEYQSSLIQEIRDNNYELTRGDVTIYLAEAFGFCWGVERAVAMAYETRKHFPTEKIWVTNEIIHNPSVNNRLKEMNVHFIEVVDGDKDFSGVANGDVVILPAFGATVQEMQLLNDRGCTIVDTTCPWVSKVWNSVEKHKKKNYTSIIHGKYKHEETVATSSFAGTYLVLLNLEEAEYVRNYILHGGDRQTFLDKFKNAYSEGFDPDKDLDRVGVANQTTMLKSETEQMGKLFEQTMLEKFGPTEINDHFMSFNTICDATQERQDAMFDLVEKDLDLMVVIGGFNSSNTTHLQEIAVERNIPSYHIDSGDRLLGNNVIAHKPLDGEITTQTHWLPAGKLKIGVTSGASTPDKVVEDVIAKIFAEKAQPAALV.

Residue Cys66 participates in [4Fe-4S] cluster binding. His96 contacts (2E)-4-hydroxy-3-methylbut-2-enyl diphosphate. His96 lines the dimethylallyl diphosphate pocket. Isopentenyl diphosphate is bound at residue His96. Cys157 lines the [4Fe-4S] cluster pocket. Position 185 (His185) interacts with (2E)-4-hydroxy-3-methylbut-2-enyl diphosphate. His185 provides a ligand contact to dimethylallyl diphosphate. His185 is a binding site for isopentenyl diphosphate. Glu187 serves as the catalytic Proton donor. Thr250 contacts (2E)-4-hydroxy-3-methylbut-2-enyl diphosphate. Cys288 provides a ligand contact to [4Fe-4S] cluster. Residues Ser317, Ser318, Asn319, and Ser379 each coordinate (2E)-4-hydroxy-3-methylbut-2-enyl diphosphate. The dimethylallyl diphosphate site is built by Ser317, Ser318, Asn319, and Ser379. The isopentenyl diphosphate site is built by Ser317, Ser318, Asn319, and Ser379.

This sequence belongs to the IspH family. It depends on [4Fe-4S] cluster as a cofactor.

It catalyses the reaction isopentenyl diphosphate + 2 oxidized [2Fe-2S]-[ferredoxin] + H2O = (2E)-4-hydroxy-3-methylbut-2-enyl diphosphate + 2 reduced [2Fe-2S]-[ferredoxin] + 2 H(+). It carries out the reaction dimethylallyl diphosphate + 2 oxidized [2Fe-2S]-[ferredoxin] + H2O = (2E)-4-hydroxy-3-methylbut-2-enyl diphosphate + 2 reduced [2Fe-2S]-[ferredoxin] + 2 H(+). The protein operates within isoprenoid biosynthesis; dimethylallyl diphosphate biosynthesis; dimethylallyl diphosphate from (2E)-4-hydroxy-3-methylbutenyl diphosphate: step 1/1. Its pathway is isoprenoid biosynthesis; isopentenyl diphosphate biosynthesis via DXP pathway; isopentenyl diphosphate from 1-deoxy-D-xylulose 5-phosphate: step 6/6. Its function is as follows. Catalyzes the conversion of 1-hydroxy-2-methyl-2-(E)-butenyl 4-diphosphate (HMBPP) into a mixture of isopentenyl diphosphate (IPP) and dimethylallyl diphosphate (DMAPP). Acts in the terminal step of the DOXP/MEP pathway for isoprenoid precursor biosynthesis. The protein is 4-hydroxy-3-methylbut-2-enyl diphosphate reductase of Picosynechococcus sp. (strain ATCC 27264 / PCC 7002 / PR-6) (Agmenellum quadruplicatum).